The primary structure comprises 515 residues: Tyrosine decarboxylase 1 (515 aa).

Tandem repeats lie at residues 81 to 138 (DDIT…TELE) and 141 to 192 (VTDW…GKDQ). The tract at residues 81 to 192 (DDITNHIVPG…KVLNKIGKDQ (112 aa)) is 2 X approximate tandem repeats. Position 105 (A105) interacts with substrate. Pyridoxal 5'-phosphate contacts are provided by T169 and C170. H205 serves as a coordination point for substrate. Residues T264 and N318 each contribute to the pyridoxal 5'-phosphate site. N6-(pyridoxal phosphate)lysine is present on K321.

The protein belongs to the group II decarboxylase family. It depends on pyridoxal 5'-phosphate as a cofactor. Mostly expressed in bulbs, and, to a lower extent, in stems, roots, leaves and flowers.

The enzyme catalyses L-tyrosine + H(+) = tyramine + CO2. Its pathway is alkaloid biosynthesis. In terms of biological role, catalyzes the decarboxylation of L-tyrosine to tyramine, which is converted to norbelladine, a precursor to all Amaryllidaceae alkaloids such as galanthamine, lycorine and haemanthamine, and including haemanthamine- and crinamine-type alkaloids, promising anticancer agents. In Narcissus pseudonarcissus (Daffodil), this protein is Tyrosine decarboxylase 1.